We begin with the raw amino-acid sequence, 473 residues long: Tubulin gamma chain (473 aa).

Residues 33–56 form a disordered region; the sequence is TDGLSQLPDSSTERDDDTKPFFRE. The segment covering 43 to 56 has biased composition (basic and acidic residues); the sequence is STERDDDTKPFFRE. GTP is bound at residue 143-149; that stretch reads AGGTGSG.

This sequence belongs to the tubulin family. In terms of assembly, interacts with SPC72, SPC97 and SPC98.

Its subcellular location is the cytoplasm. The protein resides in the cytoskeleton. It is found in the microtubule organizing center. It localises to the spindle pole body. Tubulin is the major constituent of microtubules. The gamma chain is found at microtubule organizing centers (MTOC) such as the spindle poles or the centrosome, suggesting that it is involved in the minus-end nucleation of microtubule assembly. TUB4 is an important spindle pole body component that organizes both cytoplasmic and nuclear microtubule arrays. This chain is Tubulin gamma chain (TUB4), found in Saccharomyces cerevisiae (strain ATCC 204508 / S288c) (Baker's yeast).